Reading from the N-terminus, the 133-residue chain is Ribosome-binding factor A (133 aa).

It belongs to the RbfA family. In terms of assembly, monomer. Binds 30S ribosomal subunits, but not 50S ribosomal subunits or 70S ribosomes.

Its subcellular location is the cytoplasm. One of several proteins that assist in the late maturation steps of the functional core of the 30S ribosomal subunit. Associates with free 30S ribosomal subunits (but not with 30S subunits that are part of 70S ribosomes or polysomes). Required for efficient processing of 16S rRNA. May interact with the 5'-terminal helix region of 16S rRNA. This is Ribosome-binding factor A from Bordetella parapertussis (strain 12822 / ATCC BAA-587 / NCTC 13253).